Here is a 402-residue protein sequence, read N- to C-terminus: Tyrosine--tRNA ligase (402 aa).

The 'HIGH' region motif lies at 48 to 57 (PSRPDLHLGH). The short motif at 232-236 (KMSKS) is the 'KMSKS' region element. Lys-235 provides a ligand contact to ATP. The S4 RNA-binding domain occupies 339 to 402 (MPIIDLLTLL…KRKFFKIRSK (64 aa)).

Belongs to the class-I aminoacyl-tRNA synthetase family. TyrS type 2 subfamily. As to quaternary structure, homodimer.

It is found in the cytoplasm. The enzyme catalyses tRNA(Tyr) + L-tyrosine + ATP = L-tyrosyl-tRNA(Tyr) + AMP + diphosphate + H(+). Its function is as follows. Catalyzes the attachment of tyrosine to tRNA(Tyr) in a two-step reaction: tyrosine is first activated by ATP to form Tyr-AMP and then transferred to the acceptor end of tRNA(Tyr). This chain is Tyrosine--tRNA ligase, found in Chlorobium chlorochromatii (strain CaD3).